Consider the following 652-residue polypeptide: Acetyl-coenzyme A synthetase (652 aa).

CoA is bound by residues 189-192 (RGDK) and Thr311. ATP is bound by residues 387–389 (GEP), 411–416 (DTWWQT), Asp500, and Arg515. Ser523 provides a ligand contact to CoA. Arg526 is a binding site for ATP. Mg(2+) is bound by residues His539 and Val542. Arg584 is a CoA binding site. An N6-acetyllysine modification is found at Lys609.

Belongs to the ATP-dependent AMP-binding enzyme family. Requires Mg(2+) as cofactor. Post-translationally, acetylated. Deacetylation by the SIR2-homolog deacetylase activates the enzyme.

It carries out the reaction acetate + ATP + CoA = acetyl-CoA + AMP + diphosphate. Catalyzes the conversion of acetate into acetyl-CoA (AcCoA), an essential intermediate at the junction of anabolic and catabolic pathways. AcsA undergoes a two-step reaction. In the first half reaction, AcsA combines acetate with ATP to form acetyl-adenylate (AcAMP) intermediate. In the second half reaction, it can then transfer the acetyl group from AcAMP to the sulfhydryl group of CoA, forming the product AcCoA. This is Acetyl-coenzyme A synthetase from Bartonella bacilliformis (strain ATCC 35685 / KC583 / Herrer 020/F12,63).